Reading from the N-terminus, the 453-residue chain is Bifunctional protein GlmU (453 aa).

A pyrophosphorylase region spans residues 1–225; sequence MHAHVILAAG…AEEALGVNTR (225 aa). UDP-N-acetyl-alpha-D-glucosamine-binding positions include 7-10, K21, Q72, and 77-78; these read LAAG and GT. D102 is a Mg(2+) binding site. Residues G138, E152, N167, and N223 each contribute to the UDP-N-acetyl-alpha-D-glucosamine site. N223 contributes to the Mg(2+) binding site. A linker region spans residues 226 to 246; it reads EELARVEGVLLRRLRAEWMGK. Residues 247 to 453 are N-acetyltransferase; it reads GVRMILPETI…GYALRKLGEG (207 aa). UDP-N-acetyl-alpha-D-glucosamine-binding residues include R329 and K347. Residue H359 is the Proton acceptor of the active site. Y362 and N373 together coordinate UDP-N-acetyl-alpha-D-glucosamine. Residues A376, 382 to 383, S401, A419, and R436 contribute to the acetyl-CoA site; that span reads NY.

The protein in the N-terminal section; belongs to the N-acetylglucosamine-1-phosphate uridyltransferase family. It in the C-terminal section; belongs to the transferase hexapeptide repeat family. In terms of assembly, homotrimer. Requires Mg(2+) as cofactor.

The protein localises to the cytoplasm. It catalyses the reaction alpha-D-glucosamine 1-phosphate + acetyl-CoA = N-acetyl-alpha-D-glucosamine 1-phosphate + CoA + H(+). The enzyme catalyses N-acetyl-alpha-D-glucosamine 1-phosphate + UTP + H(+) = UDP-N-acetyl-alpha-D-glucosamine + diphosphate. It participates in nucleotide-sugar biosynthesis; UDP-N-acetyl-alpha-D-glucosamine biosynthesis; N-acetyl-alpha-D-glucosamine 1-phosphate from alpha-D-glucosamine 6-phosphate (route II): step 2/2. The protein operates within nucleotide-sugar biosynthesis; UDP-N-acetyl-alpha-D-glucosamine biosynthesis; UDP-N-acetyl-alpha-D-glucosamine from N-acetyl-alpha-D-glucosamine 1-phosphate: step 1/1. It functions in the pathway bacterial outer membrane biogenesis; LPS lipid A biosynthesis. Catalyzes the last two sequential reactions in the de novo biosynthetic pathway for UDP-N-acetylglucosamine (UDP-GlcNAc). The C-terminal domain catalyzes the transfer of acetyl group from acetyl coenzyme A to glucosamine-1-phosphate (GlcN-1-P) to produce N-acetylglucosamine-1-phosphate (GlcNAc-1-P), which is converted into UDP-GlcNAc by the transfer of uridine 5-monophosphate (from uridine 5-triphosphate), a reaction catalyzed by the N-terminal domain. This is Bifunctional protein GlmU from Thermus thermophilus (strain ATCC 27634 / DSM 579 / HB8).